Reading from the N-terminus, the 356-residue chain is L-amino acid-D/L-Glu epimerase (356 aa).

Substrate contacts are provided by residues Arg-25, Ser-136, and Lys-161 to Lys-163. Asp-191 contacts Mg(2+). Asn-193 serves as a coordination point for substrate. Mg(2+) contacts are provided by Glu-219 and Asp-244. Residues Lys-268, Cys-296 to Met-298, and Asp-320 to Asp-322 contribute to the substrate site.

Belongs to the mandelate racemase/muconate lactonizing enzyme family. The cofactor is Mg(2+).

Functionally, catalyzes the epimerization of dipeptides with L-Glu in the second position. Has epimerase activity with L-Ala-L-Glu, L-Pro-L-Glu, L-Val-L-Glu, L-Thr-L-Glu and L-Met-L-Glu (in vitro). This chain is L-amino acid-D/L-Glu epimerase, found in Francisella philomiragia subsp. philomiragia (strain ATCC 25017 / CCUG 19701 / FSC 153 / O#319-036).